Reading from the N-terminus, the 352-residue chain is Cell division protein ZipA (352 aa).

The Periplasmic segment spans residues 1–5 (MQELR). A helical transmembrane segment spans residues 6-26 (LVLIIVGALAISALLLHGLWT). Over 27–352 (SRKEKPAKFG…REKAKLYSQA (326 aa)) the chain is Cytoplasmic. Basic and acidic residues predominate over residues 35 to 54 (FGEKPLGKLDDSNRDTEGFD). The interval 35–56 (FGEKPLGKLDDSNRDTEGFDHT) is disordered.

It belongs to the ZipA family. Interacts with FtsZ via their C-terminal domains.

Its subcellular location is the cell inner membrane. Functionally, essential cell division protein that stabilizes the FtsZ protofilaments by cross-linking them and that serves as a cytoplasmic membrane anchor for the Z ring. Also required for the recruitment to the septal ring of downstream cell division proteins. In Photobacterium profundum (strain SS9), this protein is Cell division protein ZipA.